Consider the following 84-residue polypeptide: UPF0386 protein NGR_c10980 (84 aa).

It belongs to the UPF0386 family.

This chain is UPF0386 protein NGR_c10980, found in Sinorhizobium fredii (strain NBRC 101917 / NGR234).